Consider the following 402-residue polypeptide: D-mannonate dehydratase (402 aa).

2 residues coordinate substrate: N37 and H122. Y159 (proton donor/acceptor) is an active-site residue. D210 is a binding site for Mg(2+). The active-site Proton donor/acceptor is the H212. Mg(2+) is bound by residues E236 and E262. E262, R283, H312, D316, and E339 together coordinate substrate.

This sequence belongs to the mandelate racemase/muconate lactonizing enzyme family. GalD subfamily. Mg(2+) serves as cofactor.

The catalysed reaction is D-mannonate = 2-dehydro-3-deoxy-D-gluconate + H2O. The protein operates within carbohydrate metabolism; pentose and glucuronate interconversion. In terms of biological role, catalyzes the dehydration of D-mannonate. Has no detectable activity with a panel of 70 other acid sugars (in vitro). The polypeptide is D-mannonate dehydratase (Rhizorhabdus wittichii (strain DSM 6014 / CCUG 31198 / JCM 15750 / NBRC 105917 / EY 4224 / RW1) (Sphingomonas wittichii)).